The chain runs to 287 residues: Elongation factor Ts (287 aa).

The interval T80–L83 is involved in Mg(2+) ion dislocation from EF-Tu.

This sequence belongs to the EF-Ts family.

The protein resides in the cytoplasm. Associates with the EF-Tu.GDP complex and induces the exchange of GDP to GTP. It remains bound to the aminoacyl-tRNA.EF-Tu.GTP complex up to the GTP hydrolysis stage on the ribosome. This Ectopseudomonas mendocina (strain ymp) (Pseudomonas mendocina) protein is Elongation factor Ts.